A 1181-amino-acid polypeptide reads, in one-letter code: Putative type II restriction enzyme and methyltransferase RM.MjaORFECS2P (1181 aa).

It in the C-terminal section; belongs to the N(4)/N(6)-methyltransferase family.

The catalysed reaction is Endonucleolytic cleavage of DNA to give specific double-stranded fragments with terminal 5'-phosphates.. The enzyme catalyses a 2'-deoxyadenosine in DNA + S-adenosyl-L-methionine = an N(6)-methyl-2'-deoxyadenosine in DNA + S-adenosyl-L-homocysteine + H(+). In terms of biological role, probably a G subtype restriction enzyme that recognizes an undetermined sequence and cleaves at an undetermined site. Probably also acts as an alpha subtype methylase, presumably on the same sequence. The polypeptide is Putative type II restriction enzyme and methyltransferase RM.MjaORFECS2P (Methanocaldococcus jannaschii (strain ATCC 43067 / DSM 2661 / JAL-1 / JCM 10045 / NBRC 100440) (Methanococcus jannaschii)).